A 1220-amino-acid chain; its full sequence is Diacylglycerol kinase delta (1220 aa).

Residues 1 to 47 form a disordered region; that stretch reads MAAAAGAPPPGPPQPPPPPPPEESSDSEPEAEPGSPQKLIRKVSTSG. The interval 1-52 is regulates association with membranes; it reads MAAAAGAPPPGPPQPPPPPPPEESSDSEPEAEPGSPQKLIRKVSTSGQIRQK. Pro residues predominate over residues 7 to 22; it reads APPPGPPQPPPPPPPE. One can recognise a PH domain in the interval 53–146; it reads TILKEGMLTK…WIAALKTVQN (94 aa). Phorbol-ester/DAG-type zinc fingers lie at residues 163 to 213 and 235 to 286; these read MHNW…TSNC and PHQW…VMKC. Residues 317-451 form the DAGKc domain; that stretch reads SCTSPLLVFV…MLDRWSVMAY (135 aa). The interval 554 to 584 is disordered; that stretch reads DDESQASSSLSNPPPTIAEEAEDGDGSGNIC. In terms of domain architecture, SAM spans 1151 to 1214; that stretch reads WGTEEVAAWL…LCGIKELSRS (64 aa).

The protein belongs to the eukaryotic diacylglycerol kinase family. Homooligomer. Monomer. Interacts with AP2A2; regulates clathrin-dependent endocytosis. In terms of tissue distribution, widely expressed.

The protein localises to the cell membrane. It localises to the membrane. The protein resides in the clathrin-coated pit. It is found in the cytoplasm. It catalyses the reaction a 1,2-diacyl-sn-glycerol + ATP = a 1,2-diacyl-sn-glycero-3-phosphate + ADP + H(+). It carries out the reaction 1,2-di-(9Z-octadecenoyl)-sn-glycerol + ATP = 1,2-di-(9Z-octadecenoyl)-sn-glycero-3-phosphate + ADP + H(+). The catalysed reaction is 1-octadecanoyl-2-(5Z,8Z,11Z,14Z-eicosatetraenoyl)-sn-glycerol + ATP = 1-octadecanoyl-2-(5Z,8Z,11Z,14Z-eicosatetraenoyl)-sn-glycero-3-phosphate + ADP + H(+). It participates in lipid metabolism; glycerolipid metabolism. Its function is as follows. Diacylglycerol kinase that converts diacylglycerol/DAG into phosphatidic acid/phosphatidate/PA and regulates the respective levels of these two bioactive lipids. Thereby, acts as a central switch between the signaling pathways activated by these second messengers with different cellular targets and opposite effects in numerous biological processes. By controlling the levels of diacylglycerol, regulates for instance the PKC and EGF receptor signaling pathways and plays a crucial role during development. May also regulate clathrin-dependent endocytosis. The sequence is that of Diacylglycerol kinase delta from Mus musculus (Mouse).